A 154-amino-acid chain; its full sequence is Myoglobin (154 aa).

The region spanning 2–148 is the Globin domain; it reads GLSDEEWKKV…FRNDMASRYK (147 aa). H65 serves as a coordination point for nitrite. H65 contributes to the O2 binding site. Residue H94 coordinates heme b.

It belongs to the globin family. Monomeric.

It localises to the cytoplasm. It is found in the sarcoplasm. It carries out the reaction Fe(III)-heme b-[protein] + nitric oxide + H2O = Fe(II)-heme b-[protein] + nitrite + 2 H(+). The catalysed reaction is H2O2 + AH2 = A + 2 H2O. In terms of biological role, monomeric heme protein which primary function is to store oxygen and facilitate its diffusion within muscle tissues. Reversibly binds oxygen through a pentacoordinated heme iron and enables its timely and efficient release as needed during periods of heightened demand. Depending on the oxidative conditions of tissues and cells, and in addition to its ability to bind oxygen, it also has a nitrite reductase activity whereby it regulates the production of bioactive nitric oxide. Under stress conditions, like hypoxia and anoxia, it also protects cells against reactive oxygen species thanks to its pseudoperoxidase activity. This chain is Myoglobin (MB), found in Varanus varius (Lace monitor lizard).